Reading from the N-terminus, the 262-residue chain is Pyridoxine 5'-phosphate synthase (262 aa).

Residue asparagine 6 coordinates 3-amino-2-oxopropyl phosphate. A 1-deoxy-D-xylulose 5-phosphate-binding site is contributed by 8–9; sequence DH. Arginine 17 contributes to the 3-amino-2-oxopropyl phosphate binding site. The active-site Proton acceptor is the histidine 43. Residues arginine 45 and histidine 50 each coordinate 1-deoxy-D-xylulose 5-phosphate. The active-site Proton acceptor is the glutamate 70. Threonine 102 lines the 1-deoxy-D-xylulose 5-phosphate pocket. Histidine 215 acts as the Proton donor in catalysis. 3-amino-2-oxopropyl phosphate is bound by residues glycine 216 and 237-238; that span reads GH.

It belongs to the PNP synthase family. In terms of assembly, homooctamer; tetramer of dimers.

The protein resides in the cytoplasm. The enzyme catalyses 3-amino-2-oxopropyl phosphate + 1-deoxy-D-xylulose 5-phosphate = pyridoxine 5'-phosphate + phosphate + 2 H2O + H(+). It participates in cofactor biosynthesis; pyridoxine 5'-phosphate biosynthesis; pyridoxine 5'-phosphate from D-erythrose 4-phosphate: step 5/5. In terms of biological role, catalyzes the complicated ring closure reaction between the two acyclic compounds 1-deoxy-D-xylulose-5-phosphate (DXP) and 3-amino-2-oxopropyl phosphate (1-amino-acetone-3-phosphate or AAP) to form pyridoxine 5'-phosphate (PNP) and inorganic phosphate. The sequence is that of Pyridoxine 5'-phosphate synthase from Helicobacter pylori (strain P12).